The chain runs to 238 residues: Synapse differentiation-inducing gene protein 1-like (238 aa).

Disordered regions lie at residues 1–24 (MESL…GPYP), 78–111 (KVKE…PGQA), and 126–155 (EEFQ…NFLT). Residues 1 to 162 (MESLSELQNP…FLTLPPRDHL (162 aa)) lie on the Extracellular side of the membrane. Over residues 133–151 (GDPEEEESDATSTESESED) the composition is skewed to acidic residues. Residues 163 to 183 (GLTIFSMLCCFWPLGIAAFYF) traverse the membrane as a helical segment. Topologically, residues 184-205 (SQGTSKAISKGDFRLANTTSRR) are cytoplasmic. Residues 206 to 226 (ALFLATLSIAVGAGLYVAVVV) traverse the membrane as a helical segment. The Extracellular portion of the chain corresponds to 227–238 (ALAAYMSQNGHS).

This sequence belongs to the CD225/Dispanin family.

Its subcellular location is the membrane. It is found in the golgi apparatus. It localises to the cis-Golgi network. This Bos taurus (Bovine) protein is Synapse differentiation-inducing gene protein 1-like (SYNDIG1L).